A 622-amino-acid chain; its full sequence is Low affinity potassium transport system protein Kup (622 aa).

The next 12 membrane-spanning stretches (helical) occupy residues 9-29 (LPAVTLAAIGVVYGDIGTSPL), 52-72 (FLSLIFWLLILIVSLKYLLFV), 99-119 (TPVLVIIGLIGGSFFYGEVVI), 137-157 (PSLQEFIVPLSVVVLTLLFFI), 165-185 (VGKLFAPVMLLWFLTLGVLGV), 213-233 (VSFFALGAVVLAITGVEALYA), 247-267 (WFSAVLPSLVLNYFGQGALLL), 276-296 (PFFLLAPDWAMIPLLILATLA), 337-357 (IYIPFINWLLYIAVVLVIVSF), 363-383 (LAAAYGIAVTGTMVLTSILSC), 394-414 (LLIVSVLLLALLCLDVSMFAA), and 419-439 (IFSGGWLPLLLGFLMFIAMIT).

The protein belongs to the HAK/KUP transporter (TC 2.A.72) family.

It is found in the cell inner membrane. The catalysed reaction is K(+)(in) + H(+)(in) = K(+)(out) + H(+)(out). Responsible for the low-affinity transport of potassium into the cell. Likely operates as a K(+):H(+) symporter. This chain is Low affinity potassium transport system protein Kup, found in Sodalis glossinidius (strain morsitans).